A 700-amino-acid chain; its full sequence is MEERTFEMELAGRKLLVQIGKVAQQANGAAWVKYGDTVVLVTACASKEPREGIDFFPLTVEYEERLYSVGKIPGGFIKREGKPSEKAILSARLIDRPIRPLFPHGYRNDVQVIATVLSVDPDVQPEIVAMIGSSVALSISDIPFNGPTGAVAVGLVDGQFIINPNHEQREKSLMHLVVSGTKDAIVMVEAGAKEIPEETMLDAIMYAHEYIKQIVEFIEGIVKEVGVPKSEVILHEIDKDLEEKVRAYATEKIYNALRTAEKKERNDNLDKVEQEVLEHFKEEYPDNLADIDEVLYNIMKEQMRKMITEERIRVDGRGLDDIRPIWCEVGVLPRTHGSAIFTRGQTQVLTVATLGALGDIQILDGIGDEEAKRYMHHYNFPPYSVGEVRPLRGPGRREIGHGALAERALEPVIPSEEEFPYTIRLVSEVLSSNGSTSQASVCGSTLALMDAGVPIKAPVAGVAMGLIKEGDVVSVLTDIQGIEDFLGDMDFKVAGTEKGITAIQMDIKIPGIDKEILKMALEKARRGRLYILSKMLEVIKEPRKQLSVYAPRVIRMVVDPEKIREIIGPGGKTISKIIAETGVKIDIEEDGRLYITASDLRSGERAKQMIEAITKDIAVGEIYLGKVLRITPFGAFVEIAPGKEGLVHISKLSKKRVQKVEDVVKVGDDILVKVTDIDKLGRISLSRKDALPDEEEEERN.

The Mg(2+) site is built by Asp-484 and Asp-490. The 60-residue stretch at 551-610 (PRVIRMVVDPEKIREIIGPGGKTISKIIAETGVKIDIEEDGRLYITASDLRSGERAKQMI) folds into the KH domain. The region spanning 620-688 (GEIYLGKVLR…KLGRISLSRK (69 aa)) is the S1 motif domain.

The protein belongs to the polyribonucleotide nucleotidyltransferase family. Mg(2+) serves as cofactor.

It localises to the cytoplasm. It carries out the reaction RNA(n+1) + phosphate = RNA(n) + a ribonucleoside 5'-diphosphate. In terms of biological role, involved in mRNA degradation. Catalyzes the phosphorolysis of single-stranded polyribonucleotides processively in the 3'- to 5'-direction. This is Polyribonucleotide nucleotidyltransferase from Thermoanaerobacter pseudethanolicus (strain ATCC 33223 / 39E) (Clostridium thermohydrosulfuricum).